A 173-amino-acid chain; its full sequence is MKKKEIVDDVTMKRAITRITYEIIERNKNLDKIVLAGIKTRGVYIAQRIQERLKQLENLDVPLIELDTKAYRDDVKSEQDTSLILIEIDGTDVILVDDVLYTGRTIRAAIDNIVSHGRPARVGLAVLVDRGHRELPIRADYVGKNIPTSQSEEIEVLVTEVDGKDSVNIIDPN.

The short motif at 93–105 (VILVDDVLYTGRT) is the PRPP-binding element.

The protein belongs to the purine/pyrimidine phosphoribosyltransferase family. PyrR subfamily. Homodimer and homohexamer; in equilibrium.

The catalysed reaction is UMP + diphosphate = 5-phospho-alpha-D-ribose 1-diphosphate + uracil. Regulates transcriptional attenuation of the pyrimidine nucleotide (pyr) operon by binding in a uridine-dependent manner to specific sites on pyr mRNA. This disrupts an antiterminator hairpin in the RNA and favors formation of a downstream transcription terminator, leading to a reduced expression of downstream genes. In terms of biological role, also displays a weak uracil phosphoribosyltransferase activity which is not physiologically significant. The sequence is that of Bifunctional protein PyrR from Streptococcus thermophilus (strain ATCC BAA-491 / LMD-9).